Reading from the N-terminus, the 381-residue chain is Diguanylate cyclase DosC (381 aa).

Histidine 98 contributes to the heme binding site. Residues 325-381 enclose the GGDEF domain; the sequence is TPLSVLIIDVDKFKEINDTWGHNTGDEILRKVSFLSQKRLVKSKILGAGSSRKLAVS. Aspartate 333 lines the Mg(2+) pocket. 2 residues coordinate substrate: asparagine 341 and aspartate 350.

Requires heme as cofactor. It depends on Mg(2+) as a cofactor.

It carries out the reaction 2 GTP = 3',3'-c-di-GMP + 2 diphosphate. It functions in the pathway purine metabolism; 3',5'-cyclic di-GMP biosynthesis. In terms of biological role, globin-coupled heme-based oxygen sensor protein displaying diguanylate cyclase (DGC) activity in response to oxygen availability. Thus, catalyzes the synthesis of cyclic diguanylate (c-di-GMP) via the condensation of 2 GTP molecules. Cyclic-di-GMP is a second messenger which controls cell surface-associated traits in bacteria. The polypeptide is Diguanylate cyclase DosC (dosC) (Shigella flexneri).